The chain runs to 207 residues: Urease accessory protein UreG (207 aa).

14–21 (GPVGSGKT) contributes to the GTP binding site.

Belongs to the SIMIBI class G3E GTPase family. UreG subfamily. As to quaternary structure, homodimer. UreD, UreF and UreG form a complex that acts as a GTP-hydrolysis-dependent molecular chaperone, activating the urease apoprotein by helping to assemble the nickel containing metallocenter of UreC. The UreE protein probably delivers the nickel.

The protein resides in the cytoplasm. Its function is as follows. Facilitates the functional incorporation of the urease nickel metallocenter. This process requires GTP hydrolysis, probably effectuated by UreG. This is Urease accessory protein UreG from Rhodopseudomonas palustris (strain BisB18).